A 135-amino-acid chain; its full sequence is 2-iminobutanoate/2-iminopropanoate deaminase (135 aa).

The residue at position 2 (serine 2) is an N-acetylserine. Residues lysine 13, lysine 60, lysine 67, and lysine 134 each carry the N6-succinyllysine modification.

This sequence belongs to the RutC family. Homotrimer. Interacts with YTHDF2. Expressed predominantly in liver and kidney. Lower levels in lung and brain.

It is found in the cytoplasm. It localises to the nucleus. The protein localises to the peroxisome. The protein resides in the mitochondrion. The enzyme catalyses 2-iminobutanoate + H2O = 2-oxobutanoate + NH4(+). The catalysed reaction is 2-iminopropanoate + H2O = pyruvate + NH4(+). Catalyzes the hydrolytic deamination of enamine/imine intermediates that form during the course of normal metabolism. May facilitate the release of ammonia from these potentially toxic reactive metabolites, reducing their impact on cellular components. It may act on enamine/imine intermediates formed by several types of pyridoxal-5'-phosphate-dependent dehydratases including L-threonine dehydratase. In terms of biological role, also promotes endoribonucleolytic cleavage of some transcripts by promoting recruitment of the ribonuclease P/MRP complex. Acts by bridging YTHDF2 and the ribonuclease P/MRP complex. RIDA/HRSP12 binds to N6-methyladenosine (m6A)-containing mRNAs containing a 5'-GGUUC-3' motif: cooperative binding of RIDA/HRSP12 and YTHDF2 to such transcripts lead to recruitment of the ribonuclease P/MRP complex and subsequent endoribonucleolytic cleavage. This chain is 2-iminobutanoate/2-iminopropanoate deaminase, found in Mus musculus (Mouse).